A 366-amino-acid chain; its full sequence is tRNA/tmRNA (uracil-C(5))-methyltransferase (366 aa).

Residues Q189, Y217, N222, E238, and D298 each contribute to the S-adenosyl-L-methionine site. C323 (nucleophile) is an active-site residue. E357 acts as the Proton acceptor in catalysis.

It belongs to the class I-like SAM-binding methyltransferase superfamily. RNA M5U methyltransferase family. TrmA subfamily.

It catalyses the reaction uridine(54) in tRNA + S-adenosyl-L-methionine = 5-methyluridine(54) in tRNA + S-adenosyl-L-homocysteine + H(+). The enzyme catalyses uridine(341) in tmRNA + S-adenosyl-L-methionine = 5-methyluridine(341) in tmRNA + S-adenosyl-L-homocysteine + H(+). Its function is as follows. Dual-specificity methyltransferase that catalyzes the formation of 5-methyluridine at position 54 (m5U54) in all tRNAs, and that of position 341 (m5U341) in tmRNA (transfer-mRNA). The protein is tRNA/tmRNA (uracil-C(5))-methyltransferase of Shewanella putrefaciens (strain CN-32 / ATCC BAA-453).